The primary structure comprises 247 residues: Oocyte zinc finger protein XlCOF20 (247 aa).

C2H2-type zinc fingers lie at residues 6–28, 34–56, 62–84, 90–112, 118–140, 146–168, 174–196, and 225–247; these read YDCRECGKRYTKRNNLYIHQRVH, FPCTECGKGFSHKSQLIIHQRVH, FICSECGKGFSKNYGLILHLRVH, FVCTECGQRFSKNNVLSMHQRVH, FTCTECGKRFSQKRQLNLHLRVH, FVCTECGKRFSKNDVLLIHLRVH, FMCADCGRCFSVSSSLKYHQRIC, and QSCAECGKCFSSNYNLSLHMRVH.

The protein belongs to the krueppel C2H2-type zinc-finger protein family.

It localises to the nucleus. In terms of biological role, may be involved in transcriptional regulation. This Xenopus laevis (African clawed frog) protein is Oocyte zinc finger protein XlCOF20.